Here is a 170-residue protein sequence, read N- to C-terminus: Translationally-controlled tumor protein homolog (170 aa).

A TCTP domain is found at 1 to 170; the sequence is MIIYKCIISG…FKDGLLAEKC (170 aa).

The protein belongs to the TCTP family.

Its subcellular location is the cytoplasm. In terms of biological role, involved in calcium binding and microtubule stabilization. This chain is Translationally-controlled tumor protein homolog (tpt1), found in Lateolabrax japonicus (Japanese sea perch).